The chain runs to 180 residues: Adenine phosphoribosyltransferase (180 aa).

The protein belongs to the purine/pyrimidine phosphoribosyltransferase family. In terms of assembly, homodimer.

Its subcellular location is the cytoplasm. The catalysed reaction is AMP + diphosphate = 5-phospho-alpha-D-ribose 1-diphosphate + adenine. It functions in the pathway purine metabolism; AMP biosynthesis via salvage pathway; AMP from adenine: step 1/1. Functionally, catalyzes a salvage reaction resulting in the formation of AMP, that is energically less costly than de novo synthesis. This is Adenine phosphoribosyltransferase from Marinomonas sp. (strain MWYL1).